Here is a 218-residue protein sequence, read N- to C-terminus: 3-dehydroquinate dehydratase (218 aa).

3-dehydroquinate contacts are provided by residues 29–31 (EFR) and Arg-56. His-116 serves as the catalytic Proton donor/acceptor. Lys-142 serves as the catalytic Schiff-base intermediate with substrate. The 3-dehydroquinate site is built by Arg-180, Ser-200, and Gln-204.

Belongs to the type-I 3-dehydroquinase family. As to quaternary structure, homodimer.

It catalyses the reaction 3-dehydroquinate = 3-dehydroshikimate + H2O. The protein operates within metabolic intermediate biosynthesis; chorismate biosynthesis; chorismate from D-erythrose 4-phosphate and phosphoenolpyruvate: step 3/7. Its function is as follows. Involved in the third step of the chorismate pathway, which leads to the biosynthesis of aromatic amino acids. Catalyzes the cis-dehydration of 3-dehydroquinate (DHQ) and introduces the first double bond of the aromatic ring to yield 3-dehydroshikimate. The sequence is that of 3-dehydroquinate dehydratase from Methanococcus maripaludis (strain C5 / ATCC BAA-1333).